Here is a 73-residue protein sequence, read N- to C-terminus: Large ribosomal subunit protein bL31 (73 aa).

Belongs to the bacterial ribosomal protein bL31 family. Type A subfamily. As to quaternary structure, part of the 50S ribosomal subunit.

Binds the 23S rRNA. This is Large ribosomal subunit protein bL31 from Mesorhizobium japonicum (strain LMG 29417 / CECT 9101 / MAFF 303099) (Mesorhizobium loti (strain MAFF 303099)).